Reading from the N-terminus, the 462-residue chain is Glycine--tRNA ligase (462 aa).

Residues Arg-99 and Glu-174 each coordinate substrate. Residues 206–208, 216–221, 290–291, and 334–337 each bind ATP; these read RNE, FRTREF, EL, and GADR. 221–225 lines the substrate pocket; that stretch reads FEQME. A substrate-binding site is contributed by 330 to 334; that stretch reads EPSLG.

This sequence belongs to the class-II aminoacyl-tRNA synthetase family. In terms of assembly, homodimer.

The protein localises to the cytoplasm. It carries out the reaction tRNA(Gly) + glycine + ATP = glycyl-tRNA(Gly) + AMP + diphosphate. Functionally, catalyzes the attachment of glycine to tRNA(Gly). In Macrococcus caseolyticus (strain JCSC5402) (Macrococcoides caseolyticum), this protein is Glycine--tRNA ligase.